The sequence spans 229 residues: uncharacterized protein (229 aa).

One can recognise an S4 RNA-binding domain in the interval 2–69; the sequence is QRLAKIISNA…KPRLWIYYKP (68 aa). Aspartate 102 functions as the Nucleophile in the catalytic mechanism.

It belongs to the pseudouridine synthase RsuA family.

The enzyme catalyses a uridine in RNA = a pseudouridine in RNA. This is an uncharacterized protein from Rickettsia felis (strain ATCC VR-1525 / URRWXCal2) (Rickettsia azadi).